The chain runs to 266 residues: Probable sulfate transport system permease protein cysT (266 aa).

The next 7 membrane-spanning stretches (helical) occupy residues 12 to 32 (ILLF…FLLI), 59 to 79 (MAFY…WVLT), 91 to 111 (AAVD…LATV), 129 to 149 (IVFT…PFVI), 181 to 201 (VILP…FSRA), 206 to 226 (GSIV…SVLI), and 236 to 256 (LGAS…LLLI). Positions 53-257 (YLLTVQMAFY…IALFTLLLIN (205 aa)) constitute an ABC transmembrane type-1 domain.

The protein belongs to the binding-protein-dependent transport system permease family. CysTW subfamily.

The protein resides in the plastid. It localises to the chloroplast membrane. Functionally, part of the ABC transporter complex cysAWTP (TC 3.A.1.6.1) involved in sulfate/thiosulfate import. Probably responsible for the translocation of the substrate across the membrane. The sequence is that of Probable sulfate transport system permease protein cysT (cysT) from Chlorella vulgaris (Green alga).